We begin with the raw amino-acid sequence, 374 residues long: MAEPGEGLPEEVLALIFRHLSLRDRAAAARVCRAWAAAATCSAVWHDTKISCECELEGMLPPYLSACLDHIHNLRLEFEPSRKPSRRAAIELLMVLAGRAPGLRGLRLECRGEKPLFDAGRDVLEAVHAVCGAASQLRHLDLRRLSFTLDDALVLQAARSCPELHSLFLDNSTLVGSVGPGSVLELLEACPRLRALGLHLASLSHAILEALAAPDRAPFALLALRCACPEDARASPLPNEAWVALRRRHPGLAVELELEPALPAESVTRVLQPAVPVAALRLNLSGDTVGPVRFAAHHYAATLCALEVRAAASAELNAALEELAARCAALREVHCFCVVSHSVLDAFRAHCPRLRTYTLKLTREPHPWRPTLVA.

Residues 2–48 form the F-box domain; that stretch reads AEPGEGLPEEVLALIFRHLSLRDRAAAARVCRAWAAAATCSAVWHDT.

In terms of assembly, directly interacts with SKP1 and CUL1.

In terms of biological role, substrate-recognition component of the SCF (SKP1-CUL1-F-box protein)-type E3 ubiquitin ligase complex. The protein is F-box/LRR-repeat protein 8 (FBXL8) of Homo sapiens (Human).